Reading from the N-terminus, the 122-residue chain is Acidic phospholipase A2 4 (122 aa).

7 disulfides stabilise this stretch: Cys-26-Cys-115, Cys-28-Cys-44, Cys-43-Cys-95, Cys-49-Cys-122, Cys-50-Cys-88, Cys-57-Cys-81, and Cys-75-Cys-86. Residues Phe-27, Gly-29, and Gly-31 each contribute to the Ca(2+) site. Residue His-47 is part of the active site. Asp-48 contacts Ca(2+). Asp-89 is a catalytic residue.

This sequence belongs to the phospholipase A2 family. Group II subfamily. D49 sub-subfamily. It depends on Ca(2+) as a cofactor. Expressed by the venom gland.

Its subcellular location is the secreted. It carries out the reaction a 1,2-diacyl-sn-glycero-3-phosphocholine + H2O = a 1-acyl-sn-glycero-3-phosphocholine + a fatty acid + H(+). Functionally, snake venom phospholipase A2 (PLA2) that has high lipolytic activity. PLA2 catalyzes the calcium-dependent hydrolysis of the 2-acyl groups in 3-sn-phosphoglycerides. The sequence is that of Acidic phospholipase A2 4 from Craspedocephalus gramineus (Bamboo pit viper).